An 805-amino-acid polypeptide reads, in one-letter code: Cation channel sperm-associated auxiliary subunit delta (805 aa).

The signal sequence occupies residues 1-16 (MLVLMLAAAVATMVRA). At 17 to 723 (HTLCRVHTVR…ALPVTKFQPL (707 aa)) the chain is on the extracellular side. 7 disulfide bridges follow: Cys-20/Cys-366, Cys-56/Cys-143, Cys-142/Cys-149, Cys-384/Cys-493, Cys-507/Cys-701, Cys-522/Cys-569, and Cys-621/Cys-651. N-linked (GlcNAc...) asparagine glycosylation is found at Asn-227, Asn-419, Asn-469, Asn-535, and Asn-627. The helical transmembrane segment at 724-745 (LTILLMVTTTLLTAWLAYAIPK) threads the bilayer. The Cytoplasmic portion of the chain corresponds to 746-805 (QLRSEKGQRLLGFCYQILQLCLGVCFCTWLRGKLRQWLRPRRVKDQNRGKVRVAQKHPET).

Belongs to the CATSPERD family. Component of the CatSper complex or CatSpermasome composed of the core pore-forming members CATSPER1, CATSPER2, CATSPER3 and CATSPER4 as well as auxiliary members CATSPERB, CATSPERG2, CATSPERD, CATSPERE, CATSPERZ, C2CD6/CATSPERT, SLCO6C1, TMEM249, TMEM262 and EFCAB9. HSPA1 may be an additional auxiliary complex member. The core complex members CATSPER1, CATSPER2, CATSPER3 and CATSPER4 form a heterotetrameric channel. The auxiliary CATSPERB, CATSPERG2, CATSPERD and CATSPERE subunits form a pavilion-like structure over the pore which stabilizes the complex through interactions with CATSPER4, CATSPER3, CATSPER1 and CATSPER2 respectively. SLCO6C1 interacts with CATSPERE and TMEM262/CATSPERH interacts with CATSPERB, further stabilizing the complex. C2CD6/CATSPERT interacts at least with CATSPERD and is required for targeting the CatSper complex in the flagellar membrane. In terms of tissue distribution, testis-specific.

Its subcellular location is the cell projection. The protein resides in the cilium. It is found in the flagellum membrane. In terms of biological role, auxiliary component of the CatSper complex, a complex involved in sperm cell hyperactivation. Sperm cell hyperactivation is needed for sperm motility which is essential late in the preparation of sperm for fertilization. Required for CATSPER1 stability before intraflagellar transport and/or incorporation of the CatSper complex channel into the flagellar membrane. The protein is Cation channel sperm-associated auxiliary subunit delta of Mus musculus (Mouse).